Here is a 943-residue protein sequence, read N- to C-terminus: Isoleucine--tRNA ligase (943 aa).

A 'HIGH' region motif is present at residues 58–68 (PYANGKIHIGH). Position 567 (E567) interacts with L-isoleucyl-5'-AMP. The short motif at 608–612 (KMSKS) is the 'KMSKS' region element. Position 611 (K611) interacts with ATP. Zn(2+)-binding residues include C906, C909, C926, and C929.

It belongs to the class-I aminoacyl-tRNA synthetase family. IleS type 1 subfamily. In terms of assembly, monomer. Zn(2+) is required as a cofactor.

The protein resides in the cytoplasm. It catalyses the reaction tRNA(Ile) + L-isoleucine + ATP = L-isoleucyl-tRNA(Ile) + AMP + diphosphate. Functionally, catalyzes the attachment of isoleucine to tRNA(Ile). As IleRS can inadvertently accommodate and process structurally similar amino acids such as valine, to avoid such errors it has two additional distinct tRNA(Ile)-dependent editing activities. One activity is designated as 'pretransfer' editing and involves the hydrolysis of activated Val-AMP. The other activity is designated 'posttransfer' editing and involves deacylation of mischarged Val-tRNA(Ile). The sequence is that of Isoleucine--tRNA ligase from Pseudomonas entomophila (strain L48).